We begin with the raw amino-acid sequence, 401 residues long: Subtilisin-like protease 7 (401 aa).

The first 20 residues, 1-20 (MGFITKAIPLALAAASVING), serve as a signal peptide directing secretion. The propeptide occupies 21 to 119 (AEILETRAGV…IERDARVQIN (99 aa)). Residues 36 to 118 (KYIVVMNDGM…YIERDARVQI (83 aa)) enclose the Inhibitor I9 domain. A glycan (N-linked (GlcNAc...) asparagine) is linked at N58. One can recognise a Peptidase S8 domain in the interval 129 to 401 (SWGLARVGSR…SKLINNGSGM (273 aa)). Active-site charge relay system residues include D161 and H193. N-linked (GlcNAc...) asparagine glycosylation is found at N223 and N253. S347 serves as the catalytic Charge relay system. Residue N397 is glycosylated (N-linked (GlcNAc...) asparagine).

Belongs to the peptidase S8 family.

The protein resides in the secreted. Functionally, secreted subtilisin-like serine protease with keratinolytic activity that contributes to pathogenicity. The polypeptide is Subtilisin-like protease 7 (SUB7) (Trichophyton equinum (Horse ringworm fungus)).